The chain runs to 201 residues: Large ribosomal subunit protein uL4 (201 aa).

The disordered stretch occupies residues arginine 44 to alanine 68.

It belongs to the universal ribosomal protein uL4 family. Part of the 50S ribosomal subunit.

In terms of biological role, one of the primary rRNA binding proteins, this protein initially binds near the 5'-end of the 23S rRNA. It is important during the early stages of 50S assembly. It makes multiple contacts with different domains of the 23S rRNA in the assembled 50S subunit and ribosome. Functionally, forms part of the polypeptide exit tunnel. This Buchnera aphidicola subsp. Acyrthosiphon pisum (strain 5A) protein is Large ribosomal subunit protein uL4.